Reading from the N-terminus, the 313-residue chain is Formimidoylglutamase (313 aa).

Mn(2+)-binding residues include histidine 130, aspartate 155, histidine 157, aspartate 159, aspartate 241, and aspartate 243.

This sequence belongs to the arginase family. It depends on Mn(2+) as a cofactor.

The catalysed reaction is N-formimidoyl-L-glutamate + H2O = formamide + L-glutamate. It participates in amino-acid degradation; L-histidine degradation into L-glutamate; L-glutamate from N-formimidoyl-L-glutamate (hydrolase route): step 1/1. Its function is as follows. Catalyzes the conversion of N-formimidoyl-L-glutamate to L-glutamate and formamide. This Salmonella typhi protein is Formimidoylglutamase.